A 281-amino-acid polypeptide reads, in one-letter code: Light-independent protochlorophyllide reductase iron-sulfur ATP-binding protein (281 aa).

Residues glycine 10 to threonine 15 and lysine 39 contribute to the ATP site. Serine 14 lines the Mg(2+) pocket. Residues cysteine 95 and cysteine 129 each contribute to the [4Fe-4S] cluster site. Residue asparagine 180–arginine 181 participates in ATP binding.

The protein belongs to the NifH/BchL/ChlL family. As to quaternary structure, homodimer. Protochlorophyllide reductase is composed of three subunits; ChlL, ChlN and ChlB. The cofactor is [4Fe-4S] cluster.

The enzyme catalyses chlorophyllide a + oxidized 2[4Fe-4S]-[ferredoxin] + 2 ADP + 2 phosphate = protochlorophyllide a + reduced 2[4Fe-4S]-[ferredoxin] + 2 ATP + 2 H2O. The protein operates within porphyrin-containing compound metabolism; chlorophyll biosynthesis (light-independent). Its function is as follows. Component of the dark-operative protochlorophyllide reductase (DPOR) that uses Mg-ATP and reduced ferredoxin to reduce ring D of protochlorophyllide (Pchlide) to form chlorophyllide a (Chlide). This reaction is light-independent. The L component serves as a unique electron donor to the NB-component of the complex, and binds Mg-ATP. This is Light-independent protochlorophyllide reductase iron-sulfur ATP-binding protein from Thermosynechococcus vestitus (strain NIES-2133 / IAM M-273 / BP-1).